The primary structure comprises 321 residues: Solute carrier family 25 member 33 (321 aa).

Solcar repeat units follow at residues Glu-9–Gln-118, Asn-126–Tyr-213, and Thr-231–Leu-315. The next 6 helical transmembrane spans lie at Leu-12–Leu-32, Val-49–Val-65, Gly-121–Val-141, Leu-190–Leu-210, Phe-233–Pro-253, and Gln-298–Asp-318.

It belongs to the mitochondrial carrier (TC 2.A.29) family.

The protein resides in the mitochondrion inner membrane. The enzyme catalyses UTP(in) + UDP(out) = UTP(out) + UDP(in). The catalysed reaction is dUTP(out) + UTP(in) = dUTP(in) + UTP(out). It catalyses the reaction 5-methyl-UTP(out) + UTP(in) = 5-methyl-UTP(in) + UTP(out). It carries out the reaction 5-methyl-UDP(out) + UTP(in) = 5-methyl-UDP(in) + UTP(out). The enzyme catalyses UTP(in) + CTP(out) = UTP(out) + CTP(in). The catalysed reaction is CDP(out) + UTP(in) = CDP(in) + UTP(out). It catalyses the reaction dCTP(out) + UTP(in) = dCTP(in) + UTP(out). It carries out the reaction dCDP(out) + UTP(in) = dCDP(in) + UTP(out). The enzyme catalyses UTP(in) + GTP(out) = UTP(out) + GTP(in). The catalysed reaction is UTP(in) + GDP(out) = UTP(out) + GDP(in). It catalyses the reaction dGTP(out) + UTP(in) = dGTP(in) + UTP(out). It carries out the reaction dGDP(out) + UTP(in) = dGDP(in) + UTP(out). The enzyme catalyses ITP(out) + UTP(in) = ITP(in) + UTP(out). Its function is as follows. Mitochondrial transporter that imports/exports pyrimidine nucleotides into and from mitochondria. Selectively transports uridine, thymidine, guanosine, cytosine and inosine (deoxy)nucleoside di- and triphosphates by an antiport mechanism. May import (deoxy)nucleoside triphosphates in exchange for intramitochondrial (deoxy)nucleoside diphosphates, thus providing precursors necessary for de novo synthesis of mitochondrial DNA and RNA while exporting products of their catabolism. Participates in mitochondrial genome maintenance, regulation of mitochondrial membrane potential and mitochondrial respiration. Upon INS or IGF1 stimulation regulates cell growth and proliferation by controlling mitochondrial DNA replication and transcription, the ratio of mitochondria-to nuclear-encoded components of the electron transport chain resulting in control of mitochondrial ROS production. Participates in dendritic cell endocytosis and may associate with mitochondrial oxidative phosphorylation. This Bos taurus (Bovine) protein is Solute carrier family 25 member 33 (SLC25A33).